Consider the following 221-residue polypeptide: 2-phospho-L-lactate guanylyltransferase (221 aa).

The protein belongs to the CofC family. As to quaternary structure, homodimer.

The enzyme catalyses (2S)-2-phospholactate + GTP + H(+) = (2S)-lactyl-2-diphospho-5'-guanosine + diphosphate. It participates in cofactor biosynthesis; coenzyme F420 biosynthesis. Guanylyltransferase that catalyzes the activation of (2S)-2-phospholactate (2-PL) as (2S)-lactyl-2-diphospho-5'-guanosine, via the condensation of 2-PL with GTP. It is involved in the biosynthesis of coenzyme F420, a hydride carrier cofactor. The protein is 2-phospho-L-lactate guanylyltransferase of Methanothrix thermoacetophila (strain DSM 6194 / JCM 14653 / NBRC 101360 / PT) (Methanosaeta thermophila).